Here is a 283-residue protein sequence, read N- to C-terminus: MKQYLELCQRIVDDGVWIENKRTNKRCLTVVNADLTFDVANNQFPLITTRKSFWKSAIAELLGYIRGYDNAADFRALGTKTWDMNANDNLAWLNNPHRKGEDDMGRVYGVQGRSWQKPDGSTIDQLRKIVDNLSEGIDDRGEILTFYNPGEFDLGCLRPCMHTHTFSLLGDTLHLTSYQRSCDVPLGLNFNQVQVYTLLALVAQITGKKPGLAYHKIINAHIYEDQLSLLRDVQLTRTPFAAPKLIINPKIKCLEDLETWVTMDDFDVIGYEHHEAIKYPFSV.

A dUMP-binding site is contributed by arginine 22. Cysteine 160 acts as the Nucleophile in catalysis. DUMP is bound by residues 180-183, asparagine 191, and 221-223; these read RSCD and HIY. Residue aspartate 183 participates in (6R)-5,10-methylene-5,6,7,8-tetrahydrofolate binding. Serine 282 lines the (6R)-5,10-methylene-5,6,7,8-tetrahydrofolate pocket.

This sequence belongs to the thymidylate synthase family. Bacterial-type ThyA subfamily. As to quaternary structure, homodimer.

The protein localises to the cytoplasm. It catalyses the reaction dUMP + (6R)-5,10-methylene-5,6,7,8-tetrahydrofolate = 7,8-dihydrofolate + dTMP. It participates in pyrimidine metabolism; dTTP biosynthesis. Its function is as follows. Catalyzes the reductive methylation of 2'-deoxyuridine-5'-monophosphate (dUMP) to 2'-deoxythymidine-5'-monophosphate (dTMP) while utilizing 5,10-methylenetetrahydrofolate (mTHF) as the methyl donor and reductant in the reaction, yielding dihydrofolate (DHF) as a by-product. This enzymatic reaction provides an intracellular de novo source of dTMP, an essential precursor for DNA biosynthesis. In Photobacterium profundum (strain SS9), this protein is Thymidylate synthase.